The chain runs to 347 residues: MRVADFHFDLPESLIARHPLAERRASRLLQLDGPSGALRHGQFTDLLEQLRPGDLMVFNNTRVIPARLFGQKASGGRLEVLVERVLDQHRVLAHVRSSKSPKPGSQILIEGGGEAEMVARHDALFELRFAEPVLPLLERVGHMPLPPYIDRPDDEADRERYQTVYAEKAGAVAAPTAGLHFDDELLAAIRAKGVETAFVTLHVGAGTFQPVRVERIEDHHMHSEWLEVSQEVVDAVAACRARGGRVVAVGTTSVRSLETAAQSSELKPFSGDTDIFIYPGRPFHVVDALVTNFHLPESTLLMLVSAFAGYAETMAAYRAAVEQGYRFFSYGDAMFITRNPAARGPEV.

This sequence belongs to the QueA family. As to quaternary structure, monomer.

The protein resides in the cytoplasm. The enzyme catalyses 7-aminomethyl-7-carbaguanosine(34) in tRNA + S-adenosyl-L-methionine = epoxyqueuosine(34) in tRNA + adenine + L-methionine + 2 H(+). Its pathway is tRNA modification; tRNA-queuosine biosynthesis. Its function is as follows. Transfers and isomerizes the ribose moiety from AdoMet to the 7-aminomethyl group of 7-deazaguanine (preQ1-tRNA) to give epoxyqueuosine (oQ-tRNA). The protein is S-adenosylmethionine:tRNA ribosyltransferase-isomerase of Ectopseudomonas mendocina (strain ymp) (Pseudomonas mendocina).